The sequence spans 359 residues: Nicotinate-nucleotide--dimethylbenzimidazole phosphoribosyltransferase (359 aa).

Catalysis depends on glutamate 318, which acts as the Proton acceptor.

This sequence belongs to the CobT family. Homodimer.

The catalysed reaction is 5,6-dimethylbenzimidazole + nicotinate beta-D-ribonucleotide = alpha-ribazole 5'-phosphate + nicotinate + H(+). The protein operates within nucleoside biosynthesis; alpha-ribazole biosynthesis; alpha-ribazole from 5,6-dimethylbenzimidazole: step 1/2. Its function is as follows. Catalyzes the synthesis of alpha-ribazole-5'-phosphate from nicotinate mononucleotide (NAMN) and 5,6-dimethylbenzimidazole (DMB). The sequence is that of Nicotinate-nucleotide--dimethylbenzimidazole phosphoribosyltransferase from Escherichia coli (strain SMS-3-5 / SECEC).